The following is a 239-amino-acid chain: Protein GUCD1 (239 aa).

The sequence is that of Protein GUCD1 (Gucd1) from Mus musculus (Mouse).